A 230-amino-acid chain; its full sequence is LexA repressor (230 aa).

Positions 28-48 (LREIGAHMGIRSTNGVNDHLR) form a DNA-binding region, H-T-H motif. Catalysis depends on for autocatalytic cleavage activity residues Ser149 and Lys186.

This sequence belongs to the peptidase S24 family. As to quaternary structure, homodimer.

The enzyme catalyses Hydrolysis of Ala-|-Gly bond in repressor LexA.. In terms of biological role, represses a number of genes involved in the response to DNA damage (SOS response), including recA and lexA. In the presence of single-stranded DNA, RecA interacts with LexA causing an autocatalytic cleavage which disrupts the DNA-binding part of LexA, leading to derepression of the SOS regulon and eventually DNA repair. This Sorangium cellulosum (strain So ce56) (Polyangium cellulosum (strain So ce56)) protein is LexA repressor.